Consider the following 154-residue polypeptide: SsrA-binding protein (154 aa).

A disordered region spans residues 130 to 154; the sequence is KLHDKRETERRRQDQRDIQRAIKRA. Over residues 133–154 the composition is skewed to basic and acidic residues; sequence DKRETERRRQDQRDIQRAIKRA.

Belongs to the SmpB family.

It localises to the cytoplasm. In terms of biological role, required for rescue of stalled ribosomes mediated by trans-translation. Binds to transfer-messenger RNA (tmRNA), required for stable association of tmRNA with ribosomes. tmRNA and SmpB together mimic tRNA shape, replacing the anticodon stem-loop with SmpB. tmRNA is encoded by the ssrA gene; the 2 termini fold to resemble tRNA(Ala) and it encodes a 'tag peptide', a short internal open reading frame. During trans-translation Ala-aminoacylated tmRNA acts like a tRNA, entering the A-site of stalled ribosomes, displacing the stalled mRNA. The ribosome then switches to translate the ORF on the tmRNA; the nascent peptide is terminated with the 'tag peptide' encoded by the tmRNA and targeted for degradation. The ribosome is freed to recommence translation, which seems to be the essential function of trans-translation. In Synechococcus elongatus (strain ATCC 33912 / PCC 7942 / FACHB-805) (Anacystis nidulans R2), this protein is SsrA-binding protein.